A 405-amino-acid chain; its full sequence is Tyrosine--tRNA ligase (405 aa).

Residues 48 to 57 carry the 'HIGH' region motif; that stretch reads PTAPDLHLGH. The 'KMSKS' region signature appears at 232–236; it reads KMSKS. Residue Lys-235 participates in ATP binding. The S4 RNA-binding domain maps to 343 to 404; the sequence is IWLPKLLADA…GKRRFVKVIF (62 aa).

The protein belongs to the class-I aminoacyl-tRNA synthetase family. TyrS type 2 subfamily. As to quaternary structure, homodimer.

The protein resides in the cytoplasm. The enzyme catalyses tRNA(Tyr) + L-tyrosine + ATP = L-tyrosyl-tRNA(Tyr) + AMP + diphosphate + H(+). Functionally, catalyzes the attachment of tyrosine to tRNA(Tyr) in a two-step reaction: tyrosine is first activated by ATP to form Tyr-AMP and then transferred to the acceptor end of tRNA(Tyr). This chain is Tyrosine--tRNA ligase, found in Desulfotalea psychrophila (strain LSv54 / DSM 12343).